A 198-amino-acid polypeptide reads, in one-letter code: MNASLRTDDVMRYQDARFKTIAAKLLPTQYLVVDDTTALTTTLGSCVAACLRDPVLKIGGMNHFLLPEGNAGDGAPARYGSYAMELLINDMLKRGAHRKRIEAKVFGGANVLKGFTSNPVGTRNAEFVRQYLQAEHIPIIAEDLCGIHPRKIWFFADTGRVVVQRLPHAHEAEVAATESAVRARLSKAPVTGGVELFE.

It belongs to the CheD family.

It carries out the reaction L-glutaminyl-[protein] + H2O = L-glutamyl-[protein] + NH4(+). Functionally, probably deamidates glutamine residues to glutamate on methyl-accepting chemotaxis receptors (MCPs), playing an important role in chemotaxis. In Stenotrophomonas maltophilia (strain R551-3), this protein is Probable chemoreceptor glutamine deamidase CheD.